The primary structure comprises 338 residues: MEKLDKILEELKLLLSSVSSLKELQEVRSKFLGSKGVIKELLKKIKEVPSEERKEYGKRVNLLKEEAEKLIKEKEEELKERELEEKLKGEWVDLSIPPARTVGSLHPITVTLERIVTIFRGMGFEVEEGPEVEREEYNFDMLNIPKEHPARDMQDTFYVNREGYLLRTHTSPVQIRTMLKKKPPIQIIAPGKVYRRDDDPTHSPMFHQVEGLVVNEYANFRHMKYVIEEFLKKFFETDLPVRFRTSYFPFTEPSAEVDIGCVICHQEGCRVCKHTGWLEVMGCGMVHPKVLENCGIDTDFYQGFAFGMGVERLAMLLFGIDNIKLFYENDLRFIKQFF.

Position 252 (E252) interacts with Mg(2+).

The protein belongs to the class-II aminoacyl-tRNA synthetase family. Phe-tRNA synthetase alpha subunit type 1 subfamily. Tetramer of two alpha and two beta subunits. Mg(2+) serves as cofactor.

It is found in the cytoplasm. The catalysed reaction is tRNA(Phe) + L-phenylalanine + ATP = L-phenylalanyl-tRNA(Phe) + AMP + diphosphate + H(+). In Aquifex aeolicus (strain VF5), this protein is Phenylalanine--tRNA ligase alpha subunit (pheS).